We begin with the raw amino-acid sequence, 325 residues long: MQFWYSRTWITWLMLPLSFLFWLISTCRQFLFRKGIFASYRAPVPVIVVGNLSVGGNGKTPVVIWLVKQLQQKGLKVGVISRGYGSQSSVYPLLVTPDTDPIQGGDEPVLIAKRTQVPVCISANRQHAIELLLQHQPDCDLIISDDGLQHYRLQRDFEIVVLDVQRGFGNGFLLPAGPLRELPSRLNTVDLIICHGQASKYSDVEMTLVPHHAINLVTGESRLLSDFHRVSAIAGIGHPQRFFSMLENLSMQLIQTKAFQDHQTFEAAQFVDFDQTQPLLMTEKDAVKCLSFAQKNWWYVPVEAEIKGEKVRSFLAKFDEIRKTV.

ATP is bound at residue 53 to 60 (SVGGNGKT).

The protein belongs to the LpxK family.

It carries out the reaction a lipid A disaccharide + ATP = a lipid IVA + ADP + H(+). It participates in glycolipid biosynthesis; lipid IV(A) biosynthesis; lipid IV(A) from (3R)-3-hydroxytetradecanoyl-[acyl-carrier-protein] and UDP-N-acetyl-alpha-D-glucosamine: step 6/6. Transfers the gamma-phosphate of ATP to the 4'-position of a tetraacyldisaccharide 1-phosphate intermediate (termed DS-1-P) to form tetraacyldisaccharide 1,4'-bis-phosphate (lipid IVA). The polypeptide is Tetraacyldisaccharide 4'-kinase (Pasteurella multocida (strain Pm70)).